The chain runs to 535 residues: Alpha-1,3-mannosyl-glycoprotein 4-beta-N-acetylglucosaminyltransferase A (535 aa).

The Cytoplasmic segment spans residues 1–4 (MRLR). The chain crosses the membrane as a helical; Signal-anchor for type II membrane protein span at residues 5–27 (NGTVATALAFITSFLTLSWYTTW). Positions 28-63 (QNGKEKLIAYQREFLALKERLRIAEHRISQRSSELN) form a coiled coil. Residues 28 to 535 (QNGKEKLIAY…NEIHIKKATK (508 aa)) are Lumenal-facing. Asn-77 and Asn-458 each carry an N-linked (GlcNAc...) asparagine glycan. Ser-474 carries the post-translational modification Phosphoserine.

Belongs to the glycosyltransferase 54 family. A divalent metal cation is required as a cofactor. In terms of processing, N-glycosylated.

Its subcellular location is the golgi apparatus membrane. It is found in the secreted. It carries out the reaction N(4)-{beta-D-GlcNAc-(1-&gt;2)-alpha-D-Man-(1-&gt;3)-[beta-D-GlcNAc-(1-&gt;2)-alpha-D-Man-(1-&gt;6)]-beta-D-Man-(1-&gt;4)-beta-D-GlcNAc-(1-&gt;4)-beta-D-GlcNAc}-L-asparaginyl-[protein] + UDP-N-acetyl-alpha-D-glucosamine = N(4)-{beta-D-GlcNAc-(1-&gt;2)-[beta-D-GlcNAc-(1-&gt;4)]-alpha-D-Man-(1-&gt;3)-[beta-D-GlcNAc-(1-&gt;2)-alpha-D-Man-(1-&gt;6)]-beta-D-Man-(1-&gt;4)-beta-D-GlcNAc-(1-&gt;4)-beta-D-GlcNAc}-L-asparaginyl-[protein] + UDP + H(+). The catalysed reaction is an N(4)-{beta-D-GlcNAc-(1-&gt;2)-alpha-D-Man-(1-&gt;3)-[alpha-D-Man-(1-&gt;6)]-beta-D-Man-(1-&gt;4)-beta-D-GlcNAc-(1-&gt;4)-beta-D-GlcNAc}-L-asparaginyl-[protein] + UDP-N-acetyl-alpha-D-glucosamine = an N(4)-{beta-D-GlcNAc-(1-&gt;2)-[beta-D-GlcNAc-(1-&gt;4)]-alpha-D-Man-(1-&gt;3)-[alpha-D-Man-(1-&gt;6)]-beta-D-Man-(1-&gt;4)-beta-D-GlcNAc-(1-&gt;4)-beta-D-GlcNAc}-L-asparaginyl-[protein] + UDP + H(+). It catalyses the reaction an N(4)-{beta-D-GlcNAc-(1-&gt;2)-alpha-D-Man-(1-&gt;3)-[beta-D-GlcNAc-(1-&gt;2)-[beta-D-GlcNAc-(1-&gt;6)]-alpha-D-Man-(1-&gt;6)]-beta-D-Man-(1-&gt;4)-beta-D-GlcNAc-(1-&gt;4)-beta-D-GlcNAc}-L-asparaginyl-[protein] + UDP-N-acetyl-alpha-D-glucosamine = an N(4)-{beta-D-GlcNAc-(1-&gt;2)-[beta-D-GlcNAc-(1-&gt;4)]-alpha-D-Man-(1-&gt;3)-[beta-D-GlcNAc-(1-&gt;2)-[beta-D-GlcNAc-(1-&gt;6)]-alpha-D-Man-(1-&gt;6)]-beta-D-Man-(1-&gt;4)-beta-D-GlcNAc-(1-&gt;4)-beta-D-GlcNAc}-L-asparaginyl-[protein] + UDP + H(+). The enzyme catalyses an N(4)-{beta-D-GlcNAc-(1-&gt;2)-alpha-D-Man-(1-&gt;3)-[beta-D-GlcNAc-(1-&gt;2)-alpha-D-Man-(1-&gt;6)]-beta-D-Man-(1-&gt;4)-beta-D-GlcNAc-(1-&gt;4)-[alpha-L-Fuc-(1-&gt;6)]-beta-D-GlcNAc}-L-asparaginyl-[protein] + UDP-N-acetyl-alpha-D-glucosamine = N(4)-{beta-D-GlcNAc-(1-&gt;2)-[beta-D-GlcNAc-(1-&gt;4)]-alpha-D-Man-(1-&gt;3)-[beta-D-GlcNAc-(1-&gt;2)-alpha-D-Man-(1-&gt;6)]-beta-D-Man-(1-&gt;4)-beta-D-GlcNAc-(1-&gt;4)-[alpha-L-Fuc-(1-&gt;6)]-beta-D-GlcNAc}-asparaginyl-[protein] + UDP + H(+). It carries out the reaction an N(4)-{beta-D-GlcNAc-(1-&gt;2)-alpha-D-Man-(1-&gt;3)-[beta-D-Gal-(1-&gt;4)-beta-D-GlcNAc-(1-&gt;2)-alpha-D-Man-(1-&gt;6)]-beta-D-Man-(1-&gt;4)-beta-D-GlcNAc-(1-&gt;4)-beta-D-GlcNAc}-L-asparaginyl-[protein] + UDP-N-acetyl-alpha-D-glucosamine = an N(4)-{beta-D-GlcNAc-(1-&gt;2)-[beta-D-GlcNAc-(1-&gt;4)]-alpha-D-Man-(1-&gt;3)-[beta-D-Gal-(1-&gt;4)-beta-D-GlcNAc-(1-&gt;2)-alpha-D-Man-(1-&gt;6)]-beta-D-Man-(1-&gt;4)-beta-D-GlcNAc-(1-&gt;4)-beta-D-GlcNAc}-L-asparaginyl-[protein] + UDP + H(+). The catalysed reaction is N(4)-{beta-D-GlcNAc-(1-&gt;2)-alpha-D-Man-(1-&gt;3)-[alpha-D-Man-(1-&gt;3)-{alpha-D-Man-(1-&gt;6)}-alpha-D-Man-(1-&gt;6)]-beta-D-Man-(1-&gt;4)-beta-D-GlcNAc-(1-&gt;4)-beta-D-GlcNAc}-asparaginyl-[protein] + UDP-N-acetyl-alpha-D-glucosamine = N(4)-{beta-D-GlcNAc-(1-&gt;2)-[beta-D-GlcNAc-(1-&gt;4)]-alpha-D-Man-(1-&gt;3)-[alpha-D-Man-(1-&gt;3)-{alpha-D-Man-(1-&gt;6)}-alpha-D-Man-(1-&gt;6)]-beta-D-Man-(1-&gt;4)-beta-D-GlcNAc-(1-&gt;4)-beta-D-GlcNAc}-asparaginyl-[protein] + UDP + H(+). It catalyses the reaction N(4)-{beta-D-GlcNAc-(1-&gt;2)-alpha-D-Man-(1-&gt;3)-beta-D-Man-(1-&gt;4)-beta-D-GlcNAc-(1-&gt;4)-beta-D-GlcNAc}-asparaginyl-[protein] + UDP-N-acetyl-alpha-D-glucosamine = N(4)-{beta-D-GlcNAc-(1-&gt;2)-[beta-D-GlcNAc-(1-&gt;4)]-alpha-D-Man-(1-&gt;3)-beta-D-Man-(1-&gt;4)-beta-D-GlcNAc-(1-&gt;4)-beta-D-GlcNAc}-asparaginyl-[protein] + UDP + H(+). Its pathway is protein modification; protein glycosylation. Its activity is regulated as follows. Inhibited by UDP. Functionally, glycosyltransferase that catalyze the transfer of GlcNAc from UDP-GlcNAc to the GlcNAcbeta1-2Manalpha1-3 arm of the core structure of N-linked glycans through a beta1-4 linkage and participates in the production of tri- and tetra-antennary N-linked sugar chains. Involved in glucose transport by mediating SLC2A2/GLUT2 glycosylation, thereby controlling cell-surface expression of SLC2A2 in pancreatic beta cells. This Macaca fascicularis (Crab-eating macaque) protein is Alpha-1,3-mannosyl-glycoprotein 4-beta-N-acetylglucosaminyltransferase A.